A 445-amino-acid chain; its full sequence is Glucose-6-phosphate isomerase (445 aa).

Catalysis depends on Glu-287, which acts as the Proton donor. Residues His-308 and Lys-422 contribute to the active site.

The protein belongs to the GPI family.

The protein localises to the cytoplasm. It carries out the reaction alpha-D-glucose 6-phosphate = beta-D-fructose 6-phosphate. It participates in carbohydrate biosynthesis; gluconeogenesis. Its pathway is carbohydrate degradation; glycolysis; D-glyceraldehyde 3-phosphate and glycerone phosphate from D-glucose: step 2/4. Catalyzes the reversible isomerization of glucose-6-phosphate to fructose-6-phosphate. This Bacteroides thetaiotaomicron (strain ATCC 29148 / DSM 2079 / JCM 5827 / CCUG 10774 / NCTC 10582 / VPI-5482 / E50) protein is Glucose-6-phosphate isomerase.